A 70-amino-acid chain; its full sequence is Putative membrane protein insertion efficiency factor (70 aa).

Belongs to the UPF0161 family.

Its subcellular location is the cell inner membrane. Functionally, could be involved in insertion of integral membrane proteins into the membrane. The sequence is that of Putative membrane protein insertion efficiency factor from Methylobacillus flagellatus (strain ATCC 51484 / DSM 6875 / VKM B-1610 / KT).